The chain runs to 585 residues: Arginine--tRNA ligase (585 aa).

The short motif at 131-141 (ANPTGPMHVGH) is the 'HIGH' region element.

The protein belongs to the class-I aminoacyl-tRNA synthetase family. Monomer.

Its subcellular location is the cytoplasm. The catalysed reaction is tRNA(Arg) + L-arginine + ATP = L-arginyl-tRNA(Arg) + AMP + diphosphate. This chain is Arginine--tRNA ligase, found in Rhizobium etli (strain ATCC 51251 / DSM 11541 / JCM 21823 / NBRC 15573 / CFN 42).